A 128-amino-acid chain; its full sequence is Sirohydrochlorin cobaltochelatase (128 aa).

The Proton acceptor role is filled by histidine 9. Residue histidine 9 coordinates Co(2+). Residues lysine 43 and 68-73 contribute to the substrate site; that span reads FATGTH. Histidine 73 contacts Co(2+).

The protein belongs to the CbiX family. CbiXS subfamily. Homotetramer; dimer of dimers.

It carries out the reaction Co-sirohydrochlorin + 2 H(+) = sirohydrochlorin + Co(2+). It participates in cofactor biosynthesis; adenosylcobalamin biosynthesis; cob(II)yrinate a,c-diamide from sirohydrochlorin (anaerobic route): step 1/10. In terms of biological role, catalyzes the insertion of Co(2+) into sirohydrochlorin as part of the anaerobic pathway to cobalamin biosynthesis. This is Sirohydrochlorin cobaltochelatase from Saccharolobus islandicus (strain Y.G.57.14 / Yellowstone #1) (Sulfolobus islandicus).